Reading from the N-terminus, the 213-residue chain is Small ribosomal subunit protein uS5 (213 aa).

Residues 49–112 (LEEEVMDVNL…DNAKYNLIKV (64 aa)) form the S5 DRBM domain.

The protein belongs to the universal ribosomal protein uS5 family. In terms of assembly, part of the 30S ribosomal subunit. Contacts protein S4.

With S4 and S12 plays an important role in translational accuracy. This is Small ribosomal subunit protein uS5 from Methanobrevibacter smithii (strain ATCC 35061 / DSM 861 / OCM 144 / PS).